The sequence spans 141 residues: Drosulfakinins (141 aa).

Positions Met-1–Ala-31 are cleaved as a signal peptide. Positions Gln-32–Asp-73 are excised as a propeptide. The interval Glu-49–Ser-69 is disordered. Phenylalanine amide is present on Phe-82. Positions Val-86 to Ala-111 are excised as a propeptide. A Sulfotyrosine modification is found at Tyr-117. Position 122 is a phenylalanine amide (Phe-122). Tyr-134 carries the post-translational modification Sulfotyrosine. Residue Phe-139 is modified to Phenylalanine amide.

This sequence belongs to the gastrin/cholecystokinin family.

It is found in the secreted. Its function is as follows. Drosulfakinin-0 (DSK 0) plays diverse biological roles including regulating gut muscle contraction in adults but not in larvae. This chain is Drosulfakinins, found in Drosophila erecta (Fruit fly).